The chain runs to 94 residues: Small ribosomal subunit protein bS6 (94 aa).

Belongs to the bacterial ribosomal protein bS6 family.

Functionally, binds together with bS18 to 16S ribosomal RNA. The chain is Small ribosomal subunit protein bS6 from Clostridium botulinum (strain 657 / Type Ba4).